Reading from the N-terminus, the 644-residue chain is Chaperone protein HscA (644 aa).

Belongs to the heat shock protein 70 family.

Functionally, chaperone involved in the maturation of iron-sulfur cluster-containing proteins. Has a low intrinsic ATPase activity which is markedly stimulated by HscB. Involved in the maturation of IscU. This Yersinia pseudotuberculosis serotype I (strain IP32953) protein is Chaperone protein HscA.